Here is a 196-residue protein sequence, read N- to C-terminus: Cell division protein SepF (196 aa).

A disordered region spans residues E16–P81. Residues R56–A69 are compositionally biased toward polar residues.

This sequence belongs to the SepF family. In terms of assembly, homodimer. Interacts with FtsZ.

It is found in the cytoplasm. In terms of biological role, cell division protein that is part of the divisome complex and is recruited early to the Z-ring. Probably stimulates Z-ring formation, perhaps through the cross-linking of FtsZ protofilaments. Its function overlaps with FtsA. This Lactococcus lactis subsp. lactis (strain IL1403) (Streptococcus lactis) protein is Cell division protein SepF.